Reading from the N-terminus, the 262-residue chain is UPF0619 GPI-anchored membrane protein C1322.10 (262 aa).

The N-terminal stretch at 1–20 is a signal peptide; that stretch reads MLARVGTTLFFLANALAAYA. Disordered stretches follow at residues 136 to 165 and 175 to 194; these read STSASSTSSSTATPSSSSTTSSSSSSSSST and ISSSASSSVSSSSASSSGSI. 2 N-linked (GlcNAc...) asparagine glycosylation sites follow: asparagine 207 and asparagine 227. A lipid anchor (GPI-like-anchor amidated asparagine) is attached at asparagine 242. The propeptide at 243-262 is removed in mature form; it reads GVAQLSVAACMGIAALMLIA.

This sequence belongs to the UPF0619 family.

It is found in the golgi apparatus membrane. It localises to the cell membrane. This is UPF0619 GPI-anchored membrane protein C1322.10 from Schizosaccharomyces pombe (strain 972 / ATCC 24843) (Fission yeast).